The sequence spans 977 residues: Mineralocorticoid receptor (977 aa).

Positions 1–19 are enriched in basic and acidic residues; the sequence is METKGYHSRPEGLDMERRW. 2 disordered regions span residues 1-37 and 231-288; these read METK…AERT and QGTP…VSSP. Residues 1 to 601 are modulating; it reads METKGYHSRP…STGSSRPSKI (601 aa). Over residues 231–243 the composition is skewed to polar residues; sequence QGTPLTCSPTVDN. Phosphoserine is present on residues serine 250, serine 259, serine 283, serine 287, and serine 299. The span at 259 to 288 shows a compositional bias: low complexity; sequence SPLSSPLSSMKSPISSPPSHCSVKSPVSSP. 2 disordered regions span residues 305-327 and 344-368; these read NSRC…SPAA and SGAS…KGAH. Cysteine 602, cysteine 605, cysteine 619, cysteine 622, cysteine 638, cysteine 644, cysteine 654, and cysteine 657 together coordinate Zn(2+). 2 NR C4-type zinc fingers span residues 602–622 and 638–662; these read CLVC…CGSC and CAGR…LQKC. Positions 602–667 form a DNA-binding region, nuclear receptor; that stretch reads CLVCGDGASG…RLQKCLQAGM (66 aa). The interval 668–718 is hinge; sequence NLGARKSKKLGKLKGLHEEQPQQPPPPQSPEEGTTYIAPAKEPSVNTALVP. The segment at 682–703 is disordered; it reads GLHEEQPQQPPPPQSPEEGTTY. Positions 719–957 constitute an NR LBD domain; it reads QLSSISRALT…EFPAMLVEII (239 aa). Asparagine 763 and glutamine 769 together coordinate 21-hydroxyprogesterone. Asparagine 763 and glutamine 769 together coordinate aldosterone. Progesterone contacts are provided by asparagine 763 and glutamine 769. Residues 775–778 are important for coactivator binding; sequence KWAK. Positions 810 and 938 each coordinate 21-hydroxyprogesterone. The aldosterone site is built by arginine 810 and threonine 938. Progesterone contacts are provided by arginine 810 and threonine 938.

The protein belongs to the nuclear hormone receptor family. NR3 subfamily.

It localises to the cytoplasm. The protein resides in the nucleus. Receptor for both mineralocorticoids (MC) such as aldosterone and glucocorticoids (GC) such as corticosterone or cortisol. Binds to mineralocorticoid response elements (MRE) and transactivates target genes. The effect of MC is to increase ion and water transport and thus raise extracellular fluid volume and blood pressure and lower potassium levels. This chain is Mineralocorticoid receptor (NR3C2), found in Tupaia belangeri (Common tree shrew).